The primary structure comprises 77 residues: Acyl carrier protein (77 aa).

One can recognise a Carrier domain in the interval 2 to 77 (ASIEKRIKEI…DAIDYITDHT (76 aa)). O-(pantetheine 4'-phosphoryl)serine is present on Ser-37.

This sequence belongs to the acyl carrier protein (ACP) family. Post-translationally, 4'-phosphopantetheine is transferred from CoA to a specific serine of apo-ACP by AcpS. This modification is essential for activity because fatty acids are bound in thioester linkage to the sulfhydryl of the prosthetic group.

Its subcellular location is the cytoplasm. It participates in lipid metabolism; fatty acid biosynthesis. Functionally, carrier of the growing fatty acid chain in fatty acid biosynthesis. This Geobacter sp. (strain M21) protein is Acyl carrier protein.